A 711-amino-acid polypeptide reads, in one-letter code: Polyribonucleotide nucleotidyltransferase (711 aa).

Mg(2+) is bound by residues Asp-486 and Asp-492. The region spanning 553–612 (PRIHTIKINPDKIKDVIGKGGSVIRALTEETGTTIEIEDDGTVKIAATDGEKAKHAIRRI) is the KH domain. One can recognise an S1 motif domain in the interval 622 to 690 (GRVYTGKVTR…RQGRIRLSIK (69 aa)). Residues 689 to 711 (IKEATEQSQPAAAPEAPAAEQGE) are disordered. Residues 694-711 (EQSQPAAAPEAPAAEQGE) are compositionally biased toward low complexity.

Belongs to the polyribonucleotide nucleotidyltransferase family. Component of the RNA degradosome, which is a multiprotein complex involved in RNA processing and mRNA degradation. Mg(2+) serves as cofactor.

Its subcellular location is the cytoplasm. It carries out the reaction RNA(n+1) + phosphate = RNA(n) + a ribonucleoside 5'-diphosphate. In terms of biological role, involved in mRNA degradation. Catalyzes the phosphorolysis of single-stranded polyribonucleotides processively in the 3'- to 5'-direction. The chain is Polyribonucleotide nucleotidyltransferase from Escherichia coli (strain SE11).